Consider the following 633-residue polypeptide: DNA topoisomerase 1 (633 aa).

Residues 6-115 (KKYIVVESPA…KNRIVFSEIT (110 aa)) form the Toprim domain. 2 residues coordinate Mg(2+): Glu-12 and Asp-84. One can recognise a Topo IA-type catalytic domain in the interval 130 to 543 (DMKKVRAQLA…EFYESFSSVF (414 aa)). Residues 164–169 (SAGRVQ) form an interaction with DNA region. The O-(5'-phospho-DNA)-tyrosine intermediate role is filled by Tyr-288. Intrachain disulfides connect Cys-559-Cys-578 and Cys-561-Cys-580. The segment at 559 to 580 (CSCGKEMRLSFGKYGFYLKCEC) adopts a C4-type zinc-finger fold. The segment at 601-633 (LGRKDSESGSPDGRSVEGKGNLSEKRRKGKKGS) is disordered.

This sequence belongs to the type IA topoisomerase family. In terms of assembly, monomer. Requires Mg(2+) as cofactor.

The enzyme catalyses ATP-independent breakage of single-stranded DNA, followed by passage and rejoining.. Its function is as follows. Releases the supercoiling and torsional tension of DNA, which is introduced during the DNA replication and transcription, by transiently cleaving and rejoining one strand of the DNA duplex. Introduces a single-strand break via transesterification at a target site in duplex DNA. The scissile phosphodiester is attacked by the catalytic tyrosine of the enzyme, resulting in the formation of a DNA-(5'-phosphotyrosyl)-enzyme intermediate and the expulsion of a 3'-OH DNA strand. The free DNA strand then undergoes passage around the unbroken strand, thus removing DNA supercoils. Finally, in the religation step, the DNA 3'-OH attacks the covalent intermediate to expel the active-site tyrosine and restore the DNA phosphodiester backbone. This Thermotoga maritima (strain ATCC 43589 / DSM 3109 / JCM 10099 / NBRC 100826 / MSB8) protein is DNA topoisomerase 1.